A 371-amino-acid chain; its full sequence is MPTQMEVEYWRRRYQRMNYERFAAANVIALITHAATQPLDMVRIRSQMLQEGKTFSGLGYQKGWYPFQIMEEIYAAGGGLRKFYSAFDTFFFRTVGYTTARVTAFGYFYDKVNKDPRRVARPDFLVAAGVLGGFIAGVVTNPIDIVYNRMQVDELYPQAARRNYSNTVQGLAKVAEEGALFRGAGANGFKLAAICSSMTNIYDWCKENSYFFFGPHWINRLWGTAVAVAIGTVVSMPFDMIRTRLHTMRPLPNGQMPYNGMFDCFNKIIKYECNSKWMSNFGSFYAGGEAYFLRLFLICYLSQFLVDYYNENYYDQEFWQPQRFHYQSGIDYDIHDPYTDAFNKKLVATYTTAAGGMGAAHPSGKDNLAII.

3 Solcar repeats span residues 16–111, 120–208, and 215–304; these read RMNY…FYDK, ARPD…CKEN, and PHWI…LSQF. A run of 6 helical transmembrane segments spans residues 22–42, 89–109, 126–146, 184–204, 221–241, and 281–301; these read FAAANVIALITHAATQPLDMV, TFFFRTVGYTTARVTAFGYFY, VAAGVLGGFIAGVVTNPIDIV, AGANGFKLAAICSSMTNIYDW, LWGTAVAVAIGTVVSMPFDMI, and FGSFYAGGEAYFLRLFLICYL.

Belongs to the mitochondrial carrier (TC 2.A.29) family.

It is found in the membrane. The sequence is that of Macronuclear solute carrier homolog CR-MSC from Oxytricha trifallax (Sterkiella histriomuscorum).